The primary structure comprises 649 residues: Golgin subfamily A member 6-like protein 26 (649 aa).

Disordered regions lie at residues Met1–Ala94, Gln300–Glu330, Glu358–Arg440, Lys455–Glu572, and Glu584–Gln620. Residues His10–Pro23 are compositionally biased toward low complexity. Residues Met25 to Pro46 are compositionally biased toward basic and acidic residues. 2 stretches are compositionally biased toward polar residues: residues Gln47–Ser57 and Asn65–Gly77. Residues Ser80–Ala94 show a composition bias toward basic and acidic residues. Residues Leu151–His644 adopt a coiled-coil conformation.

It belongs to the GOLGA6 family.

The polypeptide is Golgin subfamily A member 6-like protein 26 (GOLGA6L26) (Homo sapiens (Human)).